The sequence spans 89 residues: Putative ankyrin repeat protein RF_1157 (89 aa).

The ANK repeat unit spans residues 2–32 (YNTTPLNFAINQENNEEVIKYLLANGANPRL).

The polypeptide is Putative ankyrin repeat protein RF_1157 (Rickettsia felis (strain ATCC VR-1525 / URRWXCal2) (Rickettsia azadi)).